The chain runs to 66 residues: DNA gyrase inhibitor YacG (66 aa).

Residues cysteine 9, cysteine 12, cysteine 28, and cysteine 32 each coordinate Zn(2+).

The protein belongs to the DNA gyrase inhibitor YacG family. Interacts with GyrB. It depends on Zn(2+) as a cofactor.

Inhibits all the catalytic activities of DNA gyrase by preventing its interaction with DNA. Acts by binding directly to the C-terminal domain of GyrB, which probably disrupts DNA binding by the gyrase. This Pseudomonas aeruginosa (strain LESB58) protein is DNA gyrase inhibitor YacG.